The sequence spans 200 residues: Recombination protein RecR (200 aa).

Residues 58–75 (CPLCFTLKESKEADCHFC) form a C4-type zinc finger. Residues 82 to 177 (QSLCIVASPK…NISRLALGLP (96 aa)) form the Toprim domain.

Belongs to the RecR family.

Its function is as follows. May play a role in DNA repair. It seems to be involved in an RecBC-independent recombinational process of DNA repair. It may act with RecF and RecO. This Chlamydia pneumoniae (Chlamydophila pneumoniae) protein is Recombination protein RecR.